The primary structure comprises 419 residues: Innexin-2 (419 aa).

Helical transmembrane passes span 33–53 (AWFT…KQYF), 108–128 (PLVL…WNLF), 184–204 (INYF…MVLL), and 270–290 (LYIC…AGMI).

Belongs to the pannexin family.

It localises to the cell membrane. The protein localises to the cell junction. It is found in the gap junction. Its function is as follows. Structural component of the gap junctions. This Caenorhabditis elegans protein is Innexin-2 (inx-2).